A 133-amino-acid polypeptide reads, in one-letter code: Nickel-responsive regulator (133 aa).

Residues H76, H87, H89, and C95 each coordinate Ni(2+).

This sequence belongs to the transcriptional regulatory CopG/NikR family. In terms of assembly, homotetramer. It depends on Ni(2+) as a cofactor.

Its function is as follows. Transcriptional repressor of the nikABCDE operon. Is active in the presence of excessive concentrations of intracellular nickel. The protein is Nickel-responsive regulator of Escherichia coli (strain SE11).